A 101-amino-acid polypeptide reads, in one-letter code: Small ribosomal subunit protein uS14 (101 aa).

This sequence belongs to the universal ribosomal protein uS14 family. As to quaternary structure, part of the 30S ribosomal subunit. Contacts proteins S3 and S10.

Binds 16S rRNA, required for the assembly of 30S particles and may also be responsible for determining the conformation of the 16S rRNA at the A site. This Pasteurella multocida (strain Pm70) protein is Small ribosomal subunit protein uS14.